A 197-amino-acid polypeptide reads, in one-letter code: MPRPQKCRAIAQDPEYRVFGPFCVGKREDEALVMSFDEFEAIRLADVEGLYQEEAARQMQISRQTFGNILASARKKLGEMLVLGKMLNVKGGNIMISQEERIFGCAACGHQWSLPYGIARPVECPSCSSQNIHRMSPGGGFGGGRRGGGKCRGFRSGLDRGPGHGEGRCQGEGHGNGNGNGNGQGRMRRNQQEGGEV.

The interval 138–197 (GGGFGGGRRGGGKCRGFRSGLDRGPGHGEGRCQGEGHGNGNGNGNGQGRMRRNQQEGGEV) is disordered. Residues 157 to 171 (GLDRGPGHGEGRCQG) are compositionally biased toward basic and acidic residues. A compositionally biased stretch (gly residues) spans 172-184 (EGHGNGNGNGNGQ).

The protein belongs to the UPF0251 family.

This is UPF0251 protein CT1277 from Chlorobaculum tepidum (strain ATCC 49652 / DSM 12025 / NBRC 103806 / TLS) (Chlorobium tepidum).